The chain runs to 789 residues: LPS-assembly protein LptD (789 aa).

Positions 1 to 39 are cleaved as a signal peptide; the sequence is MPPRQLSQTTPSCAVVPRKRRLVAALIAVPGLMPALAHA.

Belongs to the LptD family. As to quaternary structure, component of the lipopolysaccharide transport and assembly complex. Interacts with LptE and LptA.

The protein localises to the cell outer membrane. Functionally, together with LptE, is involved in the assembly of lipopolysaccharide (LPS) at the surface of the outer membrane. The polypeptide is LPS-assembly protein LptD (Paraburkholderia xenovorans (strain LB400)).